Reading from the N-terminus, the 27-residue chain is Toxin TdII-4 (27 aa).

An LCN-type CS-alpha/beta domain is found at 1–27 (KDGYLMEPNGCKLGCLTRPAKYCWXEE).

Belongs to the long (4 C-C) scorpion toxin superfamily. Sodium channel inhibitor family. Beta subfamily. As to expression, expressed by the venom gland.

The protein localises to the secreted. Its function is as follows. Beta toxins bind voltage-independently at site-4 of sodium channels (Nav) and shift the voltage of activation toward more negative potentials thereby affecting sodium channel activation and promoting spontaneous and repetitive firing. This toxin is active against mammals and also affects neuromuscular preparations of frog. The protein is Toxin TdII-4 of Tityus discrepans (Venezuelan scorpion).